A 451-amino-acid chain; its full sequence is Tubulin alpha-1B chain (451 aa).

Positions 1–4 match the MREC motif motif; sequence MREC. GTP is bound by residues Gly-10, Gln-11, Ala-12, and Gln-15. The residue at position 40 (Lys-40) is an N6,N6,N6-trimethyllysine; alternate. Lys-40 carries the post-translational modification N6-acetyllysine; alternate. Position 48 is a phosphoserine (Ser-48). GTP contacts are provided by Glu-71, Ala-99, Ser-140, Gly-143, Gly-144, Thr-145, Gly-146, Thr-179, Glu-183, Asn-206, Tyr-224, and Asn-228. Mg(2+) is bound at residue Glu-71. Position 232 is a phosphoserine (Ser-232). Position 252 (Leu-252) interacts with GTP. Glu-254 is a catalytic residue. 3'-nitrotyrosine is present on Tyr-282. Lys-326 is covalently cross-linked (Glycyl lysine isopeptide (Lys-Gly) (interchain with G-Cter in ubiquitin)). Arg-339 is subject to Omega-N-methylarginine. Lys-370 participates in a covalent cross-link: Glycyl lysine isopeptide (Lys-Gly) (interchain with G-Cter in ubiquitin). A disordered region spans residues 432–451; it reads YEEVGVDSVEGEGEEEGEEY. The residue at position 439 (Ser-439) is a Phosphoserine. 5-glutamyl polyglutamate is present on residues Glu-443 and Glu-445. Tyr-451 bears the 3'-nitrotyrosine mark.

This sequence belongs to the tubulin family. As to quaternary structure, heterodimer of alpha- and beta-tubulin. A typical microtubule is a hollow water-filled tube with an outer diameter of 25 nm and an inner diameter of 15 nM. Alpha-beta heterodimers associate head-to-tail to form protofilaments running lengthwise along the microtubule wall with the beta-tubulin subunit facing the microtubule plus end conferring a structural polarity. Microtubules usually have 13 protofilaments but different protofilament numbers can be found in some organisms and specialized cells. Interacts with gamma-tubulin; the interaction allows microtubules to nucleate from the gamma-tubulin ring complex (gTuRC). Nascent microtubule interacts (via alpha-tubulin MREC motif) with TTC5/STRAP; this interaction may result in tubulin mRNA-targeted degradation. Component of sperm flagellar doublet microtubules. Requires Mg(2+) as cofactor. Post-translationally, some glutamate residues at the C-terminus are polyglutamylated, resulting in polyglutamate chains on the gamma-carboxyl group. Polyglutamylation plays a key role in microtubule severing by spastin (SPAST). SPAST preferentially recognizes and acts on microtubules decorated with short polyglutamate tails: severing activity by SPAST increases as the number of glutamates per tubulin rises from one to eight, but decreases beyond this glutamylation threshold. Glutamylation is also involved in cilia motility. In terms of processing, some glutamate residues at the C-terminus are monoglycylated but not polyglycylated due to the absence of functional TTLL10 in human. Monoglycylation is mainly limited to tubulin incorporated into cilia and flagella axonemes, which is required for their stability and maintenance. Flagella glycylation controls sperm motility. Both polyglutamylation and monoglycylation can coexist on the same protein on adjacent residues, and lowering glycylation levels increases polyglutamylation, and reciprocally. Acetylation of alpha chains at Lys-40 is located inside the microtubule lumen. This modification has been correlated with increased microtubule stability, intracellular transport and ciliary assembly. Post-translationally, methylation of alpha chains at Lys-40 is found in mitotic microtubules and is required for normal mitosis and cytokinesis contributing to genomic stability. In terms of processing, nitration of Tyr-451 is irreversible and interferes with normal dynein intracellular distribution. Undergoes a tyrosination/detyrosination cycle, the cyclic removal and re-addition of a C-terminal tyrosine residue by the enzymes tubulin tyrosine carboxypeptidase (MATCAP1/KIAA0895L, VASH1 or VASH2) and tubulin tyrosine ligase (TTL), respectively. Post-translationally, tyrosination promotes microtubule interaction with CAP-Gly domain-containing proteins such as CLIP1, CLIP2 and DCTN1. Tyrosination regulates the initiation of dynein-dynactin motility via interaction with DCTN1, which brings the dynein-dynactin complex into contact with microtubules. In neurons, tyrosinated tubulins mediate the initiation of retrograde vesicle transport. In terms of processing, detyrosination is involved in metaphase plate congression by guiding chromosomes during mitosis: detyrosination promotes interaction with CENPE, promoting pole-proximal transport of chromosomes toward the equator. Detyrosination increases microtubules-dependent mechanotransduction in dystrophic cardiac and skeletal muscle. In cardiomyocytes, detyrosinated microtubules are required to resist to contractile compression during contraction: detyrosination promotes association with desmin (DES) at force-generating sarcomeres, leading to buckled microtubules and mechanical resistance to contraction.

It localises to the cytoplasm. The protein resides in the cytoskeleton. The enzyme catalyses GTP + H2O = GDP + phosphate + H(+). In terms of biological role, tubulin is the major constituent of microtubules, protein filaments consisting of alpha- and beta-tubulin heterodimers. Microtubules grow by the addition of GTP-tubulin dimers to the microtubule end, where a stabilizing cap forms. Below the cap, tubulin dimers are in GDP-bound state, owing to GTPase activity of alpha-tubulin. The protein is Tubulin alpha-1B chain (TUBA1B) of Homo sapiens (Human).